The following is a 385-amino-acid chain: Lipid-A-disaccharide synthase (385 aa).

This sequence belongs to the LpxB family.

The enzyme catalyses a lipid X + a UDP-2-N,3-O-bis[(3R)-3-hydroxyacyl]-alpha-D-glucosamine = a lipid A disaccharide + UDP + H(+). Its pathway is bacterial outer membrane biogenesis; LPS lipid A biosynthesis. Functionally, condensation of UDP-2,3-diacylglucosamine and 2,3-diacylglucosamine-1-phosphate to form lipid A disaccharide, a precursor of lipid A, a phosphorylated glycolipid that anchors the lipopolysaccharide to the outer membrane of the cell. The protein is Lipid-A-disaccharide synthase of Xylella fastidiosa (strain M23).